The following is a 233-amino-acid chain: Octanoyltransferase (233 aa).

Residues 36 to 211 (DTTPDEIWLV…EFTRQLGYPT (176 aa)) enclose the BPL/LPL catalytic domain. Substrate is bound by residues 75 to 82 (RGGQVTYH), 142 to 144 (SLG), and 155 to 157 (GLA). Catalysis depends on cysteine 173, which acts as the Acyl-thioester intermediate.

It belongs to the LipB family.

The protein resides in the cytoplasm. The enzyme catalyses octanoyl-[ACP] + L-lysyl-[protein] = N(6)-octanoyl-L-lysyl-[protein] + holo-[ACP] + H(+). Its pathway is protein modification; protein lipoylation via endogenous pathway; protein N(6)-(lipoyl)lysine from octanoyl-[acyl-carrier-protein]: step 1/2. Its function is as follows. Catalyzes the transfer of endogenously produced octanoic acid from octanoyl-acyl-carrier-protein onto the lipoyl domains of lipoate-dependent enzymes. Lipoyl-ACP can also act as a substrate although octanoyl-ACP is likely to be the physiological substrate. In Yersinia pestis bv. Antiqua (strain Antiqua), this protein is Octanoyltransferase.